The chain runs to 331 residues: Fructose-1,6-bisphosphatase class 1 (331 aa).

Glutamate 100, aspartate 120, leucine 122, and aspartate 123 together coordinate Mg(2+). Residues 123–126 (DGSS), asparagine 216, tyrosine 243, 261–263 (YLY), and lysine 273 contribute to the substrate site. Glutamate 279 is a binding site for Mg(2+).

It belongs to the FBPase class 1 family. Homotetramer. It depends on Mg(2+) as a cofactor.

The protein localises to the cytoplasm. The enzyme catalyses beta-D-fructose 1,6-bisphosphate + H2O = beta-D-fructose 6-phosphate + phosphate. The protein operates within carbohydrate biosynthesis; gluconeogenesis. The polypeptide is Fructose-1,6-bisphosphatase class 1 (Amoebophilus asiaticus (strain 5a2)).